The primary structure comprises 284 residues: MVLMIVSGRSGSGKSVALRALEDMGFYCVDNLPVVLLPELARTLSERQISAAVSIDVRNMPESPEVFEQAMNNLPDAFSPQLLFLDADRNTLIRRYSDTRRLHPLSSKNLSLESAIDEENDLLEPLRSRADLIVDTSEMSVHELAEMLRTRLLGKRERELTMVFESFGFKHGIPIDADYVFDVRFLPNPHWDPKLRPMTGLDKPVAAFLDRHTEVHNFIYQTRSYLELWLPMLETNNRSYLTVAIGCTGGKHRSVYIAEQLADYFRSRGKNVQSRHRTLEKRKS.

8–15 provides a ligand contact to ATP; the sequence is GRSGSGKS. Residue 56-59 coordinates GTP; sequence DVRN. The segment at 266 to 284 is RNA-binding; it reads RSRGKNVQSRHRTLEKRKS.

The protein belongs to the RapZ-like family. RapZ subfamily. As to quaternary structure, homotrimer.

Its function is as follows. Modulates the synthesis of GlmS, by affecting the processing and stability of the regulatory small RNA GlmZ. When glucosamine-6-phosphate (GlcN6P) concentrations are high in the cell, RapZ binds GlmZ and targets it to cleavage by RNase E. Consequently, GlmZ is inactivated and unable to activate GlmS synthesis. Under low GlcN6P concentrations, RapZ is sequestered and inactivated by an other regulatory small RNA, GlmY, preventing GlmZ degradation and leading to synthesis of GlmS. The polypeptide is RNase adapter protein RapZ (Cronobacter sakazakii (strain ATCC BAA-894) (Enterobacter sakazakii)).